The primary structure comprises 186 residues: MISSNDFRTGTSIELDGSVWRVVEFLHVKPGKGSAFVRTKLKNAQTGSVVERTFRAGETVPQATLEKRTMQHTYKEGEQYVFMDMETYEEVRLSPEQMGTTVNYIKEEMEADVLFWNDTVLEVQLPTSVILEVTDTDPGVKGDTATGGTKPAIVETGAQVMVPLFISIGEKIKVDTRDGSYLGRET.

It belongs to the elongation factor P family.

The protein resides in the cytoplasm. Its pathway is protein biosynthesis; polypeptide chain elongation. Its function is as follows. Involved in peptide bond synthesis. Stimulates efficient translation and peptide-bond synthesis on native or reconstituted 70S ribosomes in vitro. Probably functions indirectly by altering the affinity of the ribosome for aminoacyl-tRNA, thus increasing their reactivity as acceptors for peptidyl transferase. The chain is Elongation factor P from Crocosphaera subtropica (strain ATCC 51142 / BH68) (Cyanothece sp. (strain ATCC 51142)).